A 403-amino-acid polypeptide reads, in one-letter code: Large ribosomal subunit protein uL3 (403 aa).

A disordered region spans residues 1–37 (MSHRKFSAPRHGSLGFLPRKRSSRHRGKVKSFPKDDP). A Phosphoserine modification is found at Ser-13. Residues 18–31 (PRKRSSRHRGKVKS) show a composition bias toward basic residues. Lys-39 is covalently cross-linked (Glycyl lysine isopeptide (Lys-Gly) (interchain with G-Cter in SUMO2)). An N6-acetyllysine modification is found at Lys-136. Glycyl lysine isopeptide (Lys-Gly) (interchain with G-Cter in SUMO2) cross-links involve residues Lys-224 and Lys-226. His-245 bears the Tele-methylhistidine mark. An N6-acetyllysine; alternate mark is found at Lys-286 and Lys-294. A Glycyl lysine isopeptide (Lys-Gly) (interchain with G-Cter in SUMO2); alternate cross-link involves residue Lys-286. Lys-294 is covalently cross-linked (Glycyl lysine isopeptide (Lys-Gly) (interchain with G-Cter in SUMO1); alternate). Ser-304 is modified (phosphoserine). At Lys-366 the chain carries N6-acetyllysine; alternate. Lys-366 is covalently cross-linked (Glycyl lysine isopeptide (Lys-Gly) (interchain with G-Cter in SUMO2); alternate). Lys-373 carries the N6-acetyllysine modification. Residues Lys-386, Lys-393, and Lys-399 each participate in a glycyl lysine isopeptide (Lys-Gly) (interchain with G-Cter in SUMO2) cross-link.

The protein belongs to the universal ribosomal protein uL3 family. Component of the large ribosomal subunit. Interacts with DHX33. Post-translationally, constitutively monomethylated at His-245 by METTL18. Methylation at His-245 regulates translation elongation by slowing ribosome traversal on tyrosine codons: slower elongation provides enough time for proper folding of synthesized proteins and prevents cellular aggregation of tyrosine-rich proteins. It is not required for incorporation of RPL3 into ribosomes.

It is found in the nucleus. The protein resides in the nucleolus. The protein localises to the cytoplasm. Functionally, component of the large ribosomal subunit. The ribosome is a large ribonucleoprotein complex responsible for the synthesis of proteins in the cell. This Oryctolagus cuniculus (Rabbit) protein is Large ribosomal subunit protein uL3 (RPL3).